Consider the following 1044-residue polypeptide: GRB10-interacting GYF protein 1 (1044 aa).

Residues Ser-24, Ser-28, Ser-137, and Ser-157 each carry the phosphoserine modification. Disordered stretches follow at residues 104 to 290 and 306 to 424; these read GKGA…DGLP and ASGA…LEDE. Basic and acidic residues-rich tracts occupy residues 148-179 and 186-203; these read NPRE…RSGF and PRKE…SLRE. Phosphoserine is present on Ser-228. Composition is skewed to basic and acidic residues over residues 237-265 and 316-332; these read GWRE…EDGR and GPKE…FRGL. The span at 333–350 shows a compositional bias: acidic residues; it reads EEEEEEEEEPSEGVDEER. Position 343 is a phosphoserine (Ser-343). Residues 366–379 are compositionally biased toward low complexity; sequence NSSSPSSLPALGPL. The segment covering 389 to 403 has biased composition (basic and acidic residues); it reads AVEKELPPAEGDELR. A Phosphoserine modification is found at Ser-408. The GYF domain maps to 476 to 524; it reads ARKWFYKDPQGEIQGPFTTQEMAEWFQAGYFSMSLLVKRGCDEGFQPLG. 2 positions are modified to phosphoserine: Ser-540 and Ser-634. A compositionally biased stretch (basic and acidic residues) spans 692-706; the sequence is KREEEERKRREEKRR. 6 disordered regions span residues 692 to 721, 820 to 842, 855 to 883, 966 to 987, 1000 to 1019, and 1024 to 1044; these read KREE…RQEE, EAGP…LGLW, SLGL…RKKT, QKAS…QEAW, NHST…RALM, and PSIL…VDDY. Positions 829 to 839 are enriched in gly residues; that stretch reads DKSGGSSGGNL. 2 stretches are compositionally biased toward low complexity: residues 855–877 and 970–984; these read SLGL…LSGR and QQRQ…QQQQ. Phosphoserine is present on Ser-863.

Belongs to the GIGYF family. Interacts with GRB10. This transient binding is increased under IGF1 stimulation and leads to recruitment of GIGYF1/GRB10 complex to IGF1 receptor. Interacts with DDX6. Ubiquitous. Lower expression in skeletal muscle, liver and testis.

In terms of biological role, may act cooperatively with GRB10 to regulate tyrosine kinase receptor signaling. May increase IGF1 receptor phosphorylation under IGF1 stimulation as well as phosphorylation of IRS1 and SHC1. In Mus musculus (Mouse), this protein is GRB10-interacting GYF protein 1 (Gigyf1).